The following is a 330-amino-acid chain: Mas-related G-protein coupled receptor member X2 (330 aa).

Topologically, residues 1–33 (MDPTTLVWGTESTTMNGNDQALPLLCGKETLIL) are extracellular. A helical membrane pass occupies residues 34–54 (VVLILFIALVGLVGNAFVLWL). Over 55–63 (LGFRMRRNA) the chain is Cytoplasmic. The chain crosses the membrane as a helical span at residues 64-84 (FSVYVLSLAGADFLFLCFPMI). The Extracellular segment spans residues 85 to 96 (NCLAYLINFFHS). Residues 97-117 (ISINFPSFFTTVMTCAYLAGL) traverse the membrane as a helical segment. The Cytoplasmic segment spans residues 118 to 144 (SMLSAISTERCLSVLWPIWYRSRRPRH). The chain crosses the membrane as a helical span at residues 145-165 (LSAVMCVLLWALSLLLSILEG). Residues 166-184 (KFCGFLFSDGDSGWCQTFD) lie on the Extracellular side of the membrane. A helical transmembrane segment spans residues 185–205 (FITAAWLMFLFVVLCGSSLAL). At 206-228 (LVRILCGSRGLPLTRLYLTILLT) the chain is on the cytoplasmic side. A helical transmembrane segment spans residues 229-249 (VLIFLLCGLPFGIQWFLILWI). Residues 250–264 (WKNSDVLFCHIHPVS) are Extracellular-facing. A helical transmembrane segment spans residues 265 to 285 (VVLSSFNSSANPIIYFFVGSF). Topologically, residues 286–330 (RKQWRLRQPVLKLALQRALQDTAEVDHSEGCFSQGTLEMSGSSLV) are cytoplasmic.

It belongs to the G-protein coupled receptor 1 family. Mas subfamily.

It is found in the cell membrane. Functionally, mast cell-specific receptor for basic secretagogues, i.e. cationic amphiphilic drugs, as well as endo- or exogenous peptides, consisting of a basic head group and a hydrophobic core. Recognizes and binds small molecules containing a cyclized tetrahydroisoquinoline (THIQ), such as non-steroidal neuromuscular blocking drugs (NMBDs), including tubocurarine and atracurium. In response to these compounds, mediates pseudo-allergic reactions characterized by histamine release, inflammation and airway contraction. The polypeptide is Mas-related G-protein coupled receptor member X2 (MRGPRX2) (Trachypithecus francoisi (Francois' leaf monkey)).